The sequence spans 612 residues: Phosphopentomutase (612 aa).

Ala-2 bears the N-acetylalanine mark. Alpha-D-glucose 1,6-bisphosphate contacts are provided by Arg-63 and Ser-165. Catalysis depends on Ser-165, which acts as the Phosphoserine intermediate. The Mg(2+) site is built by Ser-165, Asp-322, Asp-324, and Asp-326. Ser-165 bears the Phosphoserine mark. The alpha-D-glucose 1,6-bisphosphate site is built by Asp-326, Arg-327, Thr-400, Glu-424, and Lys-438.

This sequence belongs to the phosphohexose mutase family. As to quaternary structure, monomer. Mg(2+) serves as cofactor.

The protein resides in the cytoplasm. Its subcellular location is the cytosol. The enzyme catalyses alpha-D-ribose 1-phosphate = D-ribose 5-phosphate. It carries out the reaction 2-deoxy-alpha-D-ribose 1-phosphate = 2-deoxy-D-ribose 5-phosphate. It catalyses the reaction alpha-D-glucose 1-phosphate = alpha-D-glucose 6-phosphate. The catalysed reaction is O-phospho-L-seryl-[protein] + alpha-D-glucose 1-phosphate = alpha-D-glucose 1,6-bisphosphate + L-seryl-[protein]. The enzyme catalyses alpha-D-glucose 1,6-bisphosphate + L-seryl-[protein] = O-phospho-L-seryl-[protein] + alpha-D-glucose 6-phosphate. The phosphomutase activity is stimulated by glucose 1,6-bisphosphate. Its function is as follows. Catalyzes the conversion of the nucleoside breakdown products ribose-1-phosphate and deoxyribose-1-phosphate to the corresponding 5-phosphopentoses. Catalyzes the reversible isomerization of alpha-D-glucose 1-phosphate to alpha-D-glucose 6-phosphate but with a lower catalytic efficiency. The mechanism proceeds via the intermediate compound alpha-D-glucose 1,6-bisphosphate. In vitro, also has a low glucose 1,6-bisphosphate synthase activity which is most probably not physiologically relevant. In Homo sapiens (Human), this protein is Phosphopentomutase.